A 123-amino-acid polypeptide reads, in one-letter code: Angiogenin-2 (123 aa).

Q1 bears the Pyrrolidone carboxylic acid mark. Residue H12 is the Proton acceptor of the active site. Cystine bridges form between C25–C80, C38–C91, and C56–C106. The Nucleolar localization signal signature appears at 30–34; that stretch reads ERRNM. N-linked (GlcNAc...) asparagine glycosylation is present at N33. Zn(2+) contacts are provided by D40, H82, and H113. The active-site Proton donor is H113.

Belongs to the pancreatic ribonuclease family. As to expression, serum and milk.

Its subcellular location is the cytoplasmic vesicle. It is found in the secretory vesicle lumen. The protein localises to the secreted. The protein resides in the nucleus. It localises to the nucleolus. Its activity is regulated as follows. Divalent metal ions, such as Cu2+ and Zn2+, may inhibit the ribonucleolytic activity. In terms of biological role, binds tightly to placental ribonuclease inhibitor and has very low ribonuclease activity. Has potent angiogenic activity. Angiogenin induces vascularization of normal and malignant tissues. Abolishes protein synthesis by specifically hydrolyzing cellular tRNAs. In Bos taurus (Bovine), this protein is Angiogenin-2.